Reading from the N-terminus, the 264-residue chain is tRNA (guanine-N(1)-)-methyltransferase (264 aa).

S-adenosyl-L-methionine-binding positions include glycine 125 and 145 to 150 (LGDFVL).

The protein belongs to the RNA methyltransferase TrmD family. Homodimer.

It localises to the cytoplasm. The catalysed reaction is guanosine(37) in tRNA + S-adenosyl-L-methionine = N(1)-methylguanosine(37) in tRNA + S-adenosyl-L-homocysteine + H(+). In terms of biological role, specifically methylates guanosine-37 in various tRNAs. The polypeptide is tRNA (guanine-N(1)-)-methyltransferase (Burkholderia cenocepacia (strain ATCC BAA-245 / DSM 16553 / LMG 16656 / NCTC 13227 / J2315 / CF5610) (Burkholderia cepacia (strain J2315))).